The primary structure comprises 406 residues: Pyruvate dehydrogenase E1 component subunit beta-2, chloroplastic (406 aa).

A chloroplast-targeting transit peptide spans 1–44 (MSSIIHGAGAATTTLSTFNSVDSKKLFVAPSRTNLSVRSQRYIV). Glu142 lines the thiamine diphosphate pocket. K(+)-binding residues include Val195, Ala243, Ile244, and Asn248.

As to quaternary structure, tetramer of 2 alpha and 2 beta subunits. Requires thiamine diphosphate as cofactor.

The protein localises to the plastid. It localises to the chloroplast. The enzyme catalyses N(6)-[(R)-lipoyl]-L-lysyl-[protein] + pyruvate + H(+) = N(6)-[(R)-S(8)-acetyldihydrolipoyl]-L-lysyl-[protein] + CO2. The pyruvate dehydrogenase complex catalyzes the overall conversion of pyruvate to acetyl-CoA and CO(2). It contains multiple copies of three enzymatic components: pyruvate dehydrogenase (E1), dihydrolipoamide acetyltransferase (E2) and lipoamide dehydrogenase (E3). The chain is Pyruvate dehydrogenase E1 component subunit beta-2, chloroplastic (PDH-E1 BETA) from Arabidopsis thaliana (Mouse-ear cress).